The chain runs to 388 residues: Succinate--CoA ligase [ADP-forming] subunit beta (388 aa).

Residues Lys-9–His-244 form the ATP-grasp domain. Residues Lys-46, Gly-53–Gly-55, Glu-99, Thr-102, and Glu-107 contribute to the ATP site. Asn-199 and Asp-213 together coordinate Mg(2+). Substrate is bound by residues Asn-264 and Gly-321–Val-323.

Belongs to the succinate/malate CoA ligase beta subunit family. Heterotetramer of two alpha and two beta subunits. Requires Mg(2+) as cofactor.

The enzyme catalyses succinate + ATP + CoA = succinyl-CoA + ADP + phosphate. The catalysed reaction is GTP + succinate + CoA = succinyl-CoA + GDP + phosphate. It participates in carbohydrate metabolism; tricarboxylic acid cycle; succinate from succinyl-CoA (ligase route): step 1/1. Functionally, succinyl-CoA synthetase functions in the citric acid cycle (TCA), coupling the hydrolysis of succinyl-CoA to the synthesis of either ATP or GTP and thus represents the only step of substrate-level phosphorylation in the TCA. The beta subunit provides nucleotide specificity of the enzyme and binds the substrate succinate, while the binding sites for coenzyme A and phosphate are found in the alpha subunit. This Pectobacterium atrosepticum (strain SCRI 1043 / ATCC BAA-672) (Erwinia carotovora subsp. atroseptica) protein is Succinate--CoA ligase [ADP-forming] subunit beta.